Reading from the N-terminus, the 459-residue chain is N-chimaerin (459 aa).

The residue at position 2 (Ala2) is an N-acetylalanine. One can recognise an SH2 domain in the interval 49 to 135 (EFHGMISREA…IETKAAEYIA (87 aa)). Thr192 is modified (phosphothreonine). The segment at 205–255 (IHNFKVHTFRGPHWCEYCANFMWGLIAQGVKCADCGLNVHKQCSKMVPNDC) adopts a Phorbol-ester/DAG-type zinc-finger fold. The Rho-GAP domain maps to 268–459 (CDLTTLVKAH…LLIKNEDILF (192 aa)). The residue at position 340 (Thr340) is a Phosphothreonine.

As to quaternary structure, interacts with EPHA4; effector of EPHA4 in axon guidance linking EPHA4 activation to RAC1 regulation. In terms of processing, phosphorylated. Phosphorylation is EPHA4 kinase activity-dependent. In terms of tissue distribution, in neurons in brain regions that are involved in learning and memory processes.

Its function is as follows. GTPase-activating protein for p21-rac and a phorbol ester receptor. Involved in the assembly of neuronal locomotor circuits as a direct effector of EPHA4 in axon guidance. This Homo sapiens (Human) protein is N-chimaerin (CHN1).